Reading from the N-terminus, the 492-residue chain is MSTPAKELCRLGLREAGAGVAAKAISSTELVEASLARIQATDGKLGAFLAVCADRARAAAKAADARAARGERRSELDGVPVAVKDLFVTKGVPTTAGSRILEGYLPPYDATVVERLEAAGAVIVGKLNMDEFAMGSSNENSAYKPCHNPWDLSRTPGGSSGGSAASVAAGQVHASLGTDTGGSIREPAAFCGVVGVKPTYGRVSRYGVVAFASSLDQVGPLAREVGDAALVLRTIAGHDPRDMTSSTRPVDDYLGPLEEGARGLRVGVPREWLSGGLDAGVEAAIRAALDTYRRLGATLVDVSLPHSKYGIGAYYLIAPAEASSNLARYDGVRYGLRAEGAKGLKEMYAESREQGLGAEPKRRIMLGTYALSSGYYDAYYLRAQKVRTLIRRDFDEAFRGCDVIAGPVTPSVAFALGERTGDPLQMYLADIFTITCNLAALPGLSVPCGLEAASGLPVGLQLVGRPFDEATLFRAARALERELGPLPAPPEP.

Active-site charge relay system residues include K84 and S159. The active-site Acyl-ester intermediate is the S183.

It belongs to the amidase family. GatA subfamily. In terms of assembly, heterotrimer of A, B and C subunits.

The catalysed reaction is L-glutamyl-tRNA(Gln) + L-glutamine + ATP + H2O = L-glutaminyl-tRNA(Gln) + L-glutamate + ADP + phosphate + H(+). Its function is as follows. Allows the formation of correctly charged Gln-tRNA(Gln) through the transamidation of misacylated Glu-tRNA(Gln) in organisms which lack glutaminyl-tRNA synthetase. The reaction takes place in the presence of glutamine and ATP through an activated gamma-phospho-Glu-tRNA(Gln). The protein is Glutamyl-tRNA(Gln) amidotransferase subunit A of Anaeromyxobacter dehalogenans (strain 2CP-C).